A 151-amino-acid chain; its full sequence is Methylglyoxal synthase (151 aa).

The MGS-like domain occupies 6–151 (RTMPAHKHVA…DYEAYLAERM (146 aa)). Substrate contacts are provided by residues H19, K23, 45–48 (TGTT), and 65–66 (SG). D71 functions as the Proton donor/acceptor in the catalytic mechanism. H98 contributes to the substrate binding site.

Belongs to the methylglyoxal synthase family.

It carries out the reaction dihydroxyacetone phosphate = methylglyoxal + phosphate. Functionally, catalyzes the formation of methylglyoxal from dihydroxyacetone phosphate. This chain is Methylglyoxal synthase, found in Vibrio parahaemolyticus serotype O3:K6 (strain RIMD 2210633).